The sequence spans 61 residues: Small ribosomal subunit protein uS14 (61 aa).

Zn(2+)-binding residues include C24, C27, C40, and C43.

It belongs to the universal ribosomal protein uS14 family. Zinc-binding uS14 subfamily. In terms of assembly, part of the 30S ribosomal subunit. Contacts proteins S3 and S10. It depends on Zn(2+) as a cofactor.

In terms of biological role, binds 16S rRNA, required for the assembly of 30S particles and may also be responsible for determining the conformation of the 16S rRNA at the A site. The protein is Small ribosomal subunit protein uS14 of Dictyoglomus thermophilum (strain ATCC 35947 / DSM 3960 / H-6-12).